The chain runs to 378 residues: tRNA (guanine(26)-N(2))-dimethyltransferase (378 aa).

The Trm1 methyltransferase domain maps to 4-374 (KEVTEGKVRI…KGYEEIIRCV (371 aa)). R44, R69, D87, D114, and A115 together coordinate S-adenosyl-L-methionine. Residues C246, C249, C263, and C266 each coordinate Zn(2+).

Belongs to the class I-like SAM-binding methyltransferase superfamily. Trm1 family.

The enzyme catalyses guanosine(26) in tRNA + 2 S-adenosyl-L-methionine = N(2)-dimethylguanosine(26) in tRNA + 2 S-adenosyl-L-homocysteine + 2 H(+). Its function is as follows. Dimethylates a single guanine residue at position 26 of a number of tRNAs using S-adenosyl-L-methionine as donor of the methyl groups. In Saccharolobus islandicus (strain Y.G.57.14 / Yellowstone #1) (Sulfolobus islandicus), this protein is tRNA (guanine(26)-N(2))-dimethyltransferase.